A 45-amino-acid chain; its full sequence is Myotoxin-3 (45 aa).

3 disulfide bridges follow: C4–C36, C11–C30, and C18–C37.

As to quaternary structure, monomer. In terms of tissue distribution, expressed by the venom gland.

The protein localises to the secreted. Cationic peptide that possesses multiple functions. It acts as a cell-penetrating peptide (CPP), and as a potent voltage-gated potassium channel (Kv) inhibitor. It exhibits antimicrobial activities, hind limb paralysis, and severe muscle necrosis by a non-enzymatic mechanism. In Crotalus viridis viridis (Prairie rattlesnake), this protein is Myotoxin-3.